Here is a 167-residue protein sequence, read N- to C-terminus: Transcription antitermination protein NusB (167 aa).

Belongs to the NusB family.

Its function is as follows. Involved in transcription antitermination. Required for transcription of ribosomal RNA (rRNA) genes. Binds specifically to the boxA antiterminator sequence of the ribosomal RNA (rrn) operons. The sequence is that of Transcription antitermination protein NusB from Nitrosomonas europaea (strain ATCC 19718 / CIP 103999 / KCTC 2705 / NBRC 14298).